We begin with the raw amino-acid sequence, 595 residues long: Beta-lactamase-like protein ARB_00930 (595 aa).

The N-terminal stretch at 1–18 (MVVCFLWLLLPYAATTLS) is a signal peptide. N-linked (GlcNAc...) asparagine glycans are attached at residues Asn70 and Asn102. Catalysis depends on Ser117, which acts as the Acyl-ester intermediate. Asn147, Asn156, and Asn195 each carry an N-linked (GlcNAc...) asparagine glycan. Tyr235 serves as the catalytic Proton acceptor. N-linked (GlcNAc...) asparagine glycans are attached at residues Asn249, Asn461, and Asn473.

This sequence belongs to the beta-lactamase family.

It is found in the secreted. It carries out the reaction a beta-lactam + H2O = a substituted beta-amino acid. This is Beta-lactamase-like protein ARB_00930 from Arthroderma benhamiae (strain ATCC MYA-4681 / CBS 112371) (Trichophyton mentagrophytes).